We begin with the raw amino-acid sequence, 373 residues long: Queuine tRNA-ribosyltransferase (373 aa).

Asp91 functions as the Proton acceptor in the catalytic mechanism. Substrate contacts are provided by residues 91–95, Asp145, Gln187, and Gly214; that span reads DSGGF. The tract at residues 245-251 is RNA binding; the sequence is GVGKPED. Asp264 serves as the catalytic Nucleophile. The RNA binding; important for wobble base 34 recognition stretch occupies residues 269 to 273; it reads TRNAR. Residues Cys302, Cys304, Cys307, and His333 each coordinate Zn(2+).

The protein belongs to the queuine tRNA-ribosyltransferase family. In terms of assembly, homodimer. Within each dimer, one monomer is responsible for RNA recognition and catalysis, while the other monomer binds to the replacement base PreQ1. It depends on Zn(2+) as a cofactor.

The catalysed reaction is 7-aminomethyl-7-carbaguanine + guanosine(34) in tRNA = 7-aminomethyl-7-carbaguanosine(34) in tRNA + guanine. It participates in tRNA modification; tRNA-queuosine biosynthesis. Catalyzes the base-exchange of a guanine (G) residue with the queuine precursor 7-aminomethyl-7-deazaguanine (PreQ1) at position 34 (anticodon wobble position) in tRNAs with GU(N) anticodons (tRNA-Asp, -Asn, -His and -Tyr). Catalysis occurs through a double-displacement mechanism. The nucleophile active site attacks the C1' of nucleotide 34 to detach the guanine base from the RNA, forming a covalent enzyme-RNA intermediate. The proton acceptor active site deprotonates the incoming PreQ1, allowing a nucleophilic attack on the C1' of the ribose to form the product. After dissociation, two additional enzymatic reactions on the tRNA convert PreQ1 to queuine (Q), resulting in the hypermodified nucleoside queuosine (7-(((4,5-cis-dihydroxy-2-cyclopenten-1-yl)amino)methyl)-7-deazaguanosine). This Idiomarina loihiensis (strain ATCC BAA-735 / DSM 15497 / L2-TR) protein is Queuine tRNA-ribosyltransferase.